Here is a 228-residue protein sequence, read N- to C-terminus: MAAQQRDCGGAAQLAGPAAEADPLGRFTCPVCLEVYEKPVQVPCGHVFCSACLQECLKPKKPVCGVCRSALAPGVRAVELERQIESTETSCHGCRKKFFLSKIRSHVATCSKYQNYIMEGVKATIKDASLQPRNVPNRYTFPCPYCPEKNFDQEGLVEHCKLFHSTDTKSVVCPICASMPWGDPNYRSANFREHIQRRHRFSYDTFVDYDVDEEDMMNQVLQRSIIDQ.

The RING-type zinc finger occupies 29–68; the sequence is CPVCLEVYEKPVQVPCGHVFCSACLQECLKPKKPVCGVCR. Zn(2+) is bound by residues cysteine 91 and cysteine 94. The C2HC RNF-type zinc finger occupies 91-110; the sequence is CHGCRKKFFLSKIRSHVATC. Lysine 102 is modified (N6-acetyllysine). Zn(2+) contacts are provided by histidine 106 and cysteine 110. Residue lysine 112 is modified to N6-acetyllysine.

As to quaternary structure, interacts with XAF1, the interaction increases XAF1 stability and proapoptotic effects, and may regulate IFN signaling. Post-translationally, autoubiquitinated. Polyubiquitinated in the presence of E2 enzymes UBE2D1, UBE2D2 and UBE2D3, but only monoubiquitinated in the presence of UBE2E1.

It localises to the cytoplasm. It is found in the nucleus. It carries out the reaction S-ubiquitinyl-[E2 ubiquitin-conjugating enzyme]-L-cysteine + [acceptor protein]-L-lysine = [E2 ubiquitin-conjugating enzyme]-L-cysteine + N(6)-ubiquitinyl-[acceptor protein]-L-lysine.. The protein operates within protein modification; protein ubiquitination. Functionally, E3 ubiquitin-protein ligase that promotes the ubiquitination of various substrates. In turn, participates in the regulation of many biological processes including cell cycle, apoptosis, osteoclastogenesis as well as innate or adaptive immunity. Acts as negative regulator of NF-kappa-B-dependent transcription by promoting the ubiquitination and stabilization of the NF-kappa-B inhibitor TNFAIP3. May promote the ubiquitination of TRAF6 as well. Also acts as a negative regulator of T-cell activation. Inhibits cellular dsRNA responses and interferon production by targeting MAVS component for proteasomal degradation. Ubiquitinates the CDK inhibitor CDKN1A leading to its degradationand probably also CDKN1B and CDKN1C. This activity stimulates cell cycle G1-to-S phase transition and suppresses cellular senescence. May play a role in spermatogenesis. The polypeptide is E3 ubiquitin-protein ligase RNF114 (RNF114) (Pan troglodytes (Chimpanzee)).